Here is a 192-residue protein sequence, read N- to C-terminus: uncharacterized protein (192 aa).

Disordered regions lie at residues 1-37 (MASSCPGTPSPAGLPPPSVATPGETLGPAAPPEPAFP) and 146-192 (ARGP…EQNK). Pro residues-rich tracts occupy residues 8 to 19 (TPSPAGLPPPSV) and 159 to 180 (APPPPSRSPRPALPATAPPGWP).

This is an uncharacterized protein from Homo sapiens (Human).